Consider the following 325-residue polypeptide: tRNA U34 carboxymethyltransferase (325 aa).

Residues Lys-91, Trp-105, Lys-110, Gly-130, 152 to 154 (DPS), Met-196, Tyr-200, and Arg-315 each bind carboxy-S-adenosyl-L-methionine.

Belongs to the class I-like SAM-binding methyltransferase superfamily. CmoB family. Homotetramer.

The catalysed reaction is carboxy-S-adenosyl-L-methionine + 5-hydroxyuridine(34) in tRNA = 5-carboxymethoxyuridine(34) in tRNA + S-adenosyl-L-homocysteine + H(+). In terms of biological role, catalyzes carboxymethyl transfer from carboxy-S-adenosyl-L-methionine (Cx-SAM) to 5-hydroxyuridine (ho5U) to form 5-carboxymethoxyuridine (cmo5U) at position 34 in tRNAs. The polypeptide is tRNA U34 carboxymethyltransferase (Aeromonas salmonicida (strain A449)).